The primary structure comprises 495 residues: Anaerobic nitric oxide reductase flavorubredoxin (495 aa).

Residues 30-210 form a zinc metallo-hydrolase region; the sequence is HKGTSYNSYL…PFSPLVTAKI (181 aa). H79, E81, D83, H147, D166, and H227 together coordinate Fe cation. One can recognise a Flavodoxin-like domain in the interval 254–393; it reads ITLFYDSMSN…ECREHGRQLA (140 aa). Residues 260–264 and 342–369 each bind FMN; these read SMSNN and AFGS…DISI. The Rubredoxin-like domain maps to 438 to 489; sequence DQAMLCTVCQWVYDPAQGEPDQLVAPGTPWAQVPDSFLCPGCGIGKEVFEPC. Fe cation contacts are provided by C443, C446, C476, and C479.

In the N-terminal section; belongs to the zinc metallo-hydrolase group 3 family. As to quaternary structure, homotetramer. Fe cation serves as cofactor. The cofactor is FMN.

The protein resides in the cytoplasm. Its pathway is nitrogen metabolism; nitric oxide reduction. Its function is as follows. Anaerobic nitric oxide reductase; uses NADH to detoxify nitric oxide (NO), protecting several 4Fe-4S NO-sensitive enzymes. Has at least 2 reductase partners, only one of which (NorW, flavorubredoxin reductase) has been identified. NO probably binds to the di-iron center; electrons enter from the NorW at rubredoxin and are transferred sequentially to the FMN center and the di-iron center. Also able to function as an aerobic oxygen reductase. The polypeptide is Anaerobic nitric oxide reductase flavorubredoxin (Aeromonas hydrophila subsp. hydrophila (strain ATCC 7966 / DSM 30187 / BCRC 13018 / CCUG 14551 / JCM 1027 / KCTC 2358 / NCIMB 9240 / NCTC 8049)).